The following is a 139-amino-acid chain: MRSFEFFEHTADVGIRAYGKSLEEAFSNAALGVFEIITDTSKVKPIEYREIYLNGYDLENLLYKWIEELLYYYDSELMVFSKFDLMIDQDSMTLEGKAWGEKFNGKIHERRTVVKAMTYHQLSIEKTENCYLITFVVDI.

Ca(2+)-binding residues include aspartate 12, aspartate 138, and isoleucine 139.

Belongs to the archease family.

Functionally, activates the tRNA-splicing ligase complex by facilitating the enzymatic turnover of catalytic subunit RtcB. Acts by promoting the guanylylation of RtcB, a key intermediate step in tRNA ligation. Can also alter the NTP specificity of RtcB such that ATP, dGTP or ITP is used efficiently. The chain is Protein archease from Saccharolobus islandicus (strain Y.G.57.14 / Yellowstone #1) (Sulfolobus islandicus).